The sequence spans 130 residues: Glycine cleavage system H protein (130 aa).

One can recognise a Lipoyl-binding domain in the interval Thr-28–Glu-110. Lys-69 carries the N6-lipoyllysine modification.

This sequence belongs to the GcvH family. As to quaternary structure, the glycine cleavage system is composed of four proteins: P, T, L and H. (R)-lipoate serves as cofactor.

In terms of biological role, the glycine cleavage system catalyzes the degradation of glycine. The H protein shuttles the methylamine group of glycine from the P protein to the T protein. This is Glycine cleavage system H protein from Corynebacterium aurimucosum (strain ATCC 700975 / DSM 44827 / CIP 107346 / CN-1) (Corynebacterium nigricans).